The primary structure comprises 440 residues: Ferredoxin--NADP reductase (440 aa).

Residues 17-75 (SRVFVYEVVGMRQNEETDQTNYPIRKSGSVFIRVPYNRMNQEMQRITRLGGKIVTIQTV) form the CpcD-like domain. A disordered region spans residues 99–142 (KSEGNGKATPVKTDSGAKAFAKPPAEEQLKKKDNKGNTMTQAKA). A compositionally biased stretch (basic and acidic residues) spans 122 to 133 (PAEEQLKKKDNK). In terms of domain architecture, FAD-binding FR-type spans 155–279 (NAPFIGKVIS…TGPVGKEMLL (125 aa)). FAD contacts are provided by residues 214–217 (RLYS), 235–237 (CVR), tyrosine 241, 253–255 (VCS), and threonine 294. NADP(+)-binding residues include serine 217 and arginine 237. NADP(+) is bound by residues threonine 294, 330 to 331 (VP), 360 to 361 (SR), 370 to 374 (RMYIQ), 399 to 400 (GL), and glutamate 438.

Belongs to the ferredoxin--NADP reductase type 1 family. FAD is required as a cofactor.

It localises to the cellular thylakoid membrane. The enzyme catalyses 2 reduced [2Fe-2S]-[ferredoxin] + NADP(+) + H(+) = 2 oxidized [2Fe-2S]-[ferredoxin] + NADPH. The protein is Ferredoxin--NADP reductase (petH) of Nostoc sp. (strain ATCC 29151 / PCC 7119) (Anabaena sp.).